We begin with the raw amino-acid sequence, 412 residues long: Short-chain specific acyl-CoA dehydrogenase, mitochondrial (412 aa).

A mitochondrion-targeting transit peptide spans 1–24; the sequence is MAAALLARARGPLRRALGVRDWRR. T27 is modified (phosphothreonine). K51 carries the post-translational modification N6-acetyllysine; alternate. K51 is modified (N6-succinyllysine; alternate). K72 carries the N6-acetyllysine modification. Position 129 is an N6-acetyllysine; alternate (K129). K129 carries the post-translational modification N6-succinyllysine; alternate. FAD-binding positions include 152 to 161 and 185 to 187; these read FALSEPGNGS and WIT. S161 contributes to the substrate binding site. An N6-acetyllysine modification is found at K208. K262 is subject to N6-acetyllysine; alternate. At K262 the chain carries N6-succinyllysine; alternate. 269–272 is a substrate binding site; it reads DMGR. K292 carries the N6-acetyllysine modification. R297 provides a ligand contact to FAD. K306 carries the post-translational modification N6-acetyllysine; alternate. K306 is subject to N6-succinyllysine; alternate. FAD is bound by residues Q308 and 365–369; that span reads QILGG. The Proton acceptor role is filled by E392. G393 is a substrate binding site. 394–396 contacts FAD; it reads TSE.

The protein belongs to the acyl-CoA dehydrogenase family. In terms of assembly, homotetramer. Requires FAD as cofactor.

Its subcellular location is the mitochondrion matrix. The enzyme catalyses a short-chain 2,3-saturated fatty acyl-CoA + oxidized [electron-transfer flavoprotein] + H(+) = a short-chain (2E)-enoyl-CoA + reduced [electron-transfer flavoprotein]. It carries out the reaction butanoyl-CoA + oxidized [electron-transfer flavoprotein] + H(+) = (2E)-butenoyl-CoA + reduced [electron-transfer flavoprotein]. The catalysed reaction is pentanoyl-CoA + oxidized [electron-transfer flavoprotein] + H(+) = (2E)-pentenoyl-CoA + reduced [electron-transfer flavoprotein]. It catalyses the reaction hexanoyl-CoA + oxidized [electron-transfer flavoprotein] + H(+) = (2E)-hexenoyl-CoA + reduced [electron-transfer flavoprotein]. The protein operates within lipid metabolism; mitochondrial fatty acid beta-oxidation. Functionally, short-chain specific acyl-CoA dehydrogenase is one of the acyl-CoA dehydrogenases that catalyze the first step of mitochondrial fatty acid beta-oxidation, an aerobic process breaking down fatty acids into acetyl-CoA and allowing the production of energy from fats. The first step of fatty acid beta-oxidation consists in the removal of one hydrogen from C-2 and C-3 of the straight-chain fatty acyl-CoA thioester, resulting in the formation of trans-2-enoyl-CoA. Among the different mitochondrial acyl-CoA dehydrogenases, short-chain specific acyl-CoA dehydrogenase acts specifically on acyl-CoAs with saturated 4 to 6 carbons long primary chains. This is Short-chain specific acyl-CoA dehydrogenase, mitochondrial (Acads) from Mus musculus (Mouse).